Reading from the N-terminus, the 117-residue chain is Ig heavy chain V region MOPC 47A (117 aa).

Residues 1–113 form the Ig-like domain; the sequence is EVKLVESGGG…FAYWGZGTLV (113 aa).

The chain is Ig heavy chain V region MOPC 47A from Mus musculus (Mouse).